The chain runs to 270 residues: Homeobox protein vent1B (270 aa).

2 stretches are compositionally biased toward basic and acidic residues: residues 17–26 and 44–59; these read EEAADGKDSM and YAKEMPRRKDGQDVQE. Disordered regions lie at residues 17–66 and 88–134; these read EEAA…SFQC and TWGS…LRTA. Residues 89–99 show a composition bias toward polar residues; the sequence is WGSSDEFSSAG. Residues 116 to 131 are compositionally biased toward basic and acidic residues; that stretch reads QDTDHNGKSTKSDRRL. A DNA-binding region (homeobox) is located at residues 128–187; sequence DRRLRTAFSPQQISKLEQAFNKQRYLGASERKKLATSLMLSEIQVKTWFQNRRMKLKRQI.

In terms of tissue distribution, expressed in the ventral marginal zone of gastrulae. At the end of gastrulation, predominantly localized to the ventral region of the closing slit blastopore. At early tail bud stage, expression is maintained only in the forming proctodeum.

The protein resides in the nucleus. In terms of biological role, probable transcription regulator. Acts in a ventral signaling pathway downstream of bmp4 and vent2B. This Xenopus laevis (African clawed frog) protein is Homeobox protein vent1B (vent1B).